Consider the following 178-residue polypeptide: Ribosome maturation factor RimM (178 aa).

The PRC barrel domain maps to 98–178; that stretch reads DGEYYWNQLE…RILVDWDPEF (81 aa).

This sequence belongs to the RimM family. Binds ribosomal protein uS19.

The protein resides in the cytoplasm. In terms of biological role, an accessory protein needed during the final step in the assembly of 30S ribosomal subunit, possibly for assembly of the head region. Essential for efficient processing of 16S rRNA. May be needed both before and after RbfA during the maturation of 16S rRNA. It has affinity for free ribosomal 30S subunits but not for 70S ribosomes. The polypeptide is Ribosome maturation factor RimM (Cellvibrio japonicus (strain Ueda107) (Pseudomonas fluorescens subsp. cellulosa)).